Consider the following 61-residue polypeptide: Alpha-conotoxin-like Tx1.2 (61 aa).

The signal sequence occupies residues 1-20; that stretch reads MFTVFLLVVLATTVVSFTSG. Residues 21-42 constitute a propeptide that is removed on maturation; that stretch reads RSTFRGRNAAAKASGLVSLTDR. 2 positions are modified to 4-hydroxyproline: Pro-44 and Pro-50. 2 disulfide bridges follow: Cys-46/Cys-52 and Cys-47/Cys-60. The segment at 48–50 is ser-Xaa-Pro motif, crucial for potent interaction with nAChR; the sequence is SHP.

Belongs to the conotoxin A superfamily. In terms of tissue distribution, expressed by the venom duct.

The protein localises to the secreted. Its function is as follows. Alpha-conotoxins act on postsynaptic membranes, they bind to the nicotinic acetylcholine receptors (nAChR) and thus inhibit them. This toxin also inhibits high voltage-activated (HVA) calcium channel currents in rat DRG neurons (8% inhibition at 1 uM toxin) probably by activating GABA(B) receptors (GABBR1 and/or GABBR2). The protein is Alpha-conotoxin-like Tx1.2 of Conus textile (Cloth-of-gold cone).